A 103-amino-acid chain; its full sequence is MANKQKIRIRLKAFDHMILDQSAEKIVETAKRTGANVSGPVPLPTDKNVYTVIRAPHKFKDSREQFEMRTHKRLIDILDPTSKTVDSLMRLDLPSGVDIEIKL.

This sequence belongs to the universal ribosomal protein uS10 family. Part of the 30S ribosomal subunit.

Its function is as follows. Involved in the binding of tRNA to the ribosomes. The polypeptide is Small ribosomal subunit protein uS10 (Natranaerobius thermophilus (strain ATCC BAA-1301 / DSM 18059 / JW/NM-WN-LF)).